The primary structure comprises 215 residues: Translation initiation factor 6 (215 aa).

It belongs to the eIF-6 family.

Binds to the 50S ribosomal subunit and prevents its association with the 30S ribosomal subunit to form the 70S initiation complex. The polypeptide is Translation initiation factor 6 (Archaeoglobus fulgidus (strain ATCC 49558 / DSM 4304 / JCM 9628 / NBRC 100126 / VC-16)).